The following is a 448-amino-acid chain: Glucose-6-phosphate isomerase (448 aa).

The Proton donor role is filled by Glu291. Active-site residues include His312 and Lys425.

This sequence belongs to the GPI family.

It is found in the cytoplasm. It catalyses the reaction alpha-D-glucose 6-phosphate = beta-D-fructose 6-phosphate. The protein operates within carbohydrate biosynthesis; gluconeogenesis. It participates in carbohydrate degradation; glycolysis; D-glyceraldehyde 3-phosphate and glycerone phosphate from D-glucose: step 2/4. Functionally, catalyzes the reversible isomerization of glucose-6-phosphate to fructose-6-phosphate. This Symbiobacterium thermophilum (strain DSM 24528 / JCM 14929 / IAM 14863 / T) protein is Glucose-6-phosphate isomerase.